Reading from the N-terminus, the 530-residue chain is MEDDSLYLGGEWQFNHFSKLTSSRPDAAFAEIQRTSLPEKSPLSSEARVDLCDDLAPVARQLAPRKKLPLSSRRPAAVGAGLQNMGNTCYENASLQCLTYTPPLANYMLSREHSQTCQRPKCCMLCTMQAHITWALHSPGHVIQPSQALAAGFHRGKQEDAHEFLMFTVDAMKKACLPGHKQVDHHSKDTTLIHQIFGGCWRSQIKCLHCHGISDTFDPYLDIALDIQAAQSVKQALEQLVKPEELNGENAYHCGLCLQRAPASKTLTLHTSAKVLILVLKRFSDVTGNKLAKNVQYPECLDMQPYMSQQNTGPLVYVLYAVLVHAGWSCHDGHYFSYVKAQEGQWYKMDDAKVTACSITSVLSQQAYVLFYIQKSEWERHSESVSRGREPRALGAEDTDRRATQGELKRDHPCLQAPELDERLVERATQESTLDHWKFPQEQNKTKPEFNVRKVEGTLPPNVLVIHQSKYKCGMKNHHPEQQSSLLNLSSTTRTDQESVNTGTLASLQGRTRRSKGKNKHSKRALLVCQ.

A USP domain is found at 80 to 375; the sequence is AGLQNMGNTC…QAYVLFYIQK (296 aa). Cys-89 acts as the Nucleophile in catalysis. The active-site Proton acceptor is His-334. Composition is skewed to basic and acidic residues over residues 382–392 and 398–413; these read SESVSRGREPR and DTDR…RDHP. Disordered regions lie at residues 382–416 and 490–530; these read SESV…PCLQ and SSTT…LVCQ. Residues 399–530 are mediates interaction with SUDS3; sequence TDRRATQGEL…HSKRALLVCQ (132 aa). Over residues 498 to 510 the composition is skewed to polar residues; the sequence is ESVNTGTLASLQG. Positions 511-524 are enriched in basic residues; that stretch reads RTRRSKGKNKHSKR.

Belongs to the peptidase C19 family. USP17 subfamily. In terms of assembly, interacts with SUDS3; the interaction is direct. As to expression, broadly expressed.

The protein localises to the nucleus. It localises to the endoplasmic reticulum. The catalysed reaction is Thiol-dependent hydrolysis of ester, thioester, amide, peptide and isopeptide bonds formed by the C-terminal Gly of ubiquitin (a 76-residue protein attached to proteins as an intracellular targeting signal).. Deubiquitinating enzyme that removes conjugated ubiquitin from specific proteins to regulate different cellular processes. Regulates cell proliferation by deubiquitinating and inhibiting RCE1 thereby controlling the small GTPases NRAS and HRAS localization and activation. In parallel, mediates deubiquitination of CDC25A, preventing CDC25A degradation by the proteasome during the G1/S and G2/M phases promoting cell-cycle progression. Also regulates cell proliferation and apoptosis through deubiquitination of SUDS3 a regulator of histone deacetylation. Through activation of the Rho family GTPases RAC1A, CDC42 and RHOA, regulates cell migration. Through the cleavage of 'Lys-48'- and 'Lys-63'-linked polyubiquitin chains of the cytoplasmic innate immune receptors RIGI and IFIH1 stimulates the cellular response to viral infection. This chain is Ubiquitin carboxyl-terminal hydrolase 17 (USP17L2), found in Homo sapiens (Human).